We begin with the raw amino-acid sequence, 83 residues long: Large ribosomal subunit protein bL27 (83 aa).

This sequence belongs to the bacterial ribosomal protein bL27 family.

The protein is Large ribosomal subunit protein bL27 of Treponema denticola (strain ATCC 35405 / DSM 14222 / CIP 103919 / JCM 8153 / KCTC 15104).